The chain runs to 251 residues: Ribonuclease PH (251 aa).

Residues R90 and 128-130 (GTR) contribute to the phosphate site.

It belongs to the RNase PH family. In terms of assembly, homohexameric ring arranged as a trimer of dimers.

The enzyme catalyses tRNA(n+1) + phosphate = tRNA(n) + a ribonucleoside 5'-diphosphate. Functionally, phosphorolytic 3'-5' exoribonuclease that plays an important role in tRNA 3'-end maturation. Removes nucleotide residues following the 3'-CCA terminus of tRNAs; can also add nucleotides to the ends of RNA molecules by using nucleoside diphosphates as substrates, but this may not be physiologically important. Probably plays a role in initiation of 16S rRNA degradation (leading to ribosome degradation) during starvation. This chain is Ribonuclease PH, found in Leifsonia xyli subsp. xyli (strain CTCB07).